The primary structure comprises 83 residues: Small ribosomal subunit protein bS18 (83 aa).

The segment at 1–23 is disordered; it reads MKQRNNAKRVRLEQTRRPKKNPL.

Belongs to the bacterial ribosomal protein bS18 family. As to quaternary structure, part of the 30S ribosomal subunit. Forms a tight heterodimer with protein bS6.

Functionally, binds as a heterodimer with protein bS6 to the central domain of the 16S rRNA, where it helps stabilize the platform of the 30S subunit. The polypeptide is Small ribosomal subunit protein bS18 (Corynebacterium efficiens (strain DSM 44549 / YS-314 / AJ 12310 / JCM 11189 / NBRC 100395)).